Consider the following 161-residue polypeptide: Large ribosomal subunit protein uL10 (161 aa).

This sequence belongs to the universal ribosomal protein uL10 family. As to quaternary structure, part of the ribosomal stalk of the 50S ribosomal subunit. The N-terminus interacts with L11 and the large rRNA to form the base of the stalk. The C-terminus forms an elongated spine to which L12 dimers bind in a sequential fashion forming a multimeric L10(L12)X complex.

Forms part of the ribosomal stalk, playing a central role in the interaction of the ribosome with GTP-bound translation factors. The chain is Large ribosomal subunit protein uL10 from Sulfurovum sp. (strain NBC37-1).